Reading from the N-terminus, the 384-residue chain is S-adenosylmethionine synthase (384 aa).

Residue histidine 15 coordinates ATP. Residue aspartate 17 coordinates Mg(2+). Glutamate 43 contacts K(+). Residues glutamate 56 and glutamine 99 each contribute to the L-methionine site. The flexible loop stretch occupies residues 99-109 (QSPDINQGVDR). Residues 164–166 (DAK), 231–232 (RF), aspartate 240, 246–247 (RK), alanine 263, and lysine 267 contribute to the ATP site. Aspartate 240 contributes to the L-methionine binding site. Residue lysine 271 participates in L-methionine binding.

The protein belongs to the AdoMet synthase family. In terms of assembly, homotetramer; dimer of dimers. Mg(2+) serves as cofactor. Requires K(+) as cofactor.

It localises to the cytoplasm. The catalysed reaction is L-methionine + ATP + H2O = S-adenosyl-L-methionine + phosphate + diphosphate. It participates in amino-acid biosynthesis; S-adenosyl-L-methionine biosynthesis; S-adenosyl-L-methionine from L-methionine: step 1/1. In terms of biological role, catalyzes the formation of S-adenosylmethionine (AdoMet) from methionine and ATP. The overall synthetic reaction is composed of two sequential steps, AdoMet formation and the subsequent tripolyphosphate hydrolysis which occurs prior to release of AdoMet from the enzyme. This chain is S-adenosylmethionine synthase, found in Shewanella woodyi (strain ATCC 51908 / MS32).